The chain runs to 410 residues: Aminopeptidase AmpS (410 aa).

A divalent metal cation-binding residues include Glu250, Glu316, Glu340, His345, His378, and Asp380.

The protein belongs to the peptidase M29 family. It depends on Co(2+) as a cofactor. Zn(2+) serves as cofactor. The cofactor is Mg(2+).

Its function is as follows. Metal-dependent exopeptidase. This is Aminopeptidase AmpS (ampS) from Bacillus subtilis (strain 168).